Here is a 141-residue protein sequence, read N- to C-terminus: uncharacterized protein (141 aa).

4 helical membrane passes run 7–24 (YRIP…FLSP), 39–56 (FLKF…HRGI), 69–91 (FYLI…ILGF), and 116–138 (FFIL…SSFI).

It is found in the cell membrane. This is an uncharacterized protein from Aquifex aeolicus (strain VF5).